The following is a 1596-amino-acid chain: Cellulose synthase 2 (1596 aa).

The catalytic stretch occupies residues 1-749 (MIYRAILKRL…RSARHGATAS (749 aa)). 2 helical membrane-spanning segments follow: residues 25–45 (SPFV…GVTI) and 106–126 (LSLL…LSYF). The segment at 145 to 238 (DWPVVDVYVP…YVVIFDCDHI (94 aa)) is catalytic subdomain A. Residue aspartate 187 is part of the active site. Aspartate 234 and aspartate 236 together coordinate substrate. Positions 315–375 (SAVLGIGGFA…GQRVRWARGM (61 aa)) are catalytic subdomain B. The active site involves aspartate 331. A run of 4 helical transmembrane segments spans residues 396–416 (LCYL…VFLA), 421–441 (FLFL…VYAF), 505–525 (FDLN…LALV), and 544–564 (FALN…SIAV). Positions 570-669 (QIRHKPRVRA…ERQIVEFMFG (100 aa)) constitute a PilZ domain. Residues 750-1596 (LIVLLGLPAA…RVKDTTDASH (847 aa)) are cyclic di-GMP binding domain. Disordered regions lie at residues 769-812 (SRAT…IAPA) and 828-868 (TGPA…APPI). Residues 783-809 (VEPPPVNAPPPPSLPQPPGTLPTPPQI) are compositionally biased toward pro residues. Residues 1553–1573 (LTLYVLGLVGAGLVAAAAVRL) traverse the membrane as a helical segment.

This sequence in the N-terminal section; belongs to the glycosyltransferase 2 family. In the C-terminal section; belongs to the AcsB/BcsB family.

The protein localises to the cell inner membrane. The catalysed reaction is [(1-&gt;4)-beta-D-glucosyl](n) + UDP-alpha-D-glucose = [(1-&gt;4)-beta-D-glucosyl](n+1) + UDP + H(+). This chain is Cellulose synthase 2 (acsAII), found in Novacetimonas hansenii (Komagataeibacter hansenii).